Consider the following 555-residue polypeptide: Formate--tetrahydrofolate ligase (555 aa).

ATP is bound at residue 65–72 (TPAGEGKS).

This sequence belongs to the formate--tetrahydrofolate ligase family.

The enzyme catalyses (6S)-5,6,7,8-tetrahydrofolate + formate + ATP = (6R)-10-formyltetrahydrofolate + ADP + phosphate. Its pathway is one-carbon metabolism; tetrahydrofolate interconversion. This chain is Formate--tetrahydrofolate ligase, found in Staphylococcus aureus (strain NCTC 8325 / PS 47).